Reading from the N-terminus, the 124-residue chain is Large ribosomal subunit protein bL12 (124 aa).

It belongs to the bacterial ribosomal protein bL12 family. In terms of assembly, homodimer. Part of the ribosomal stalk of the 50S ribosomal subunit. Forms a multimeric L10(L12)X complex, where L10 forms an elongated spine to which 2 to 4 L12 dimers bind in a sequential fashion. Binds GTP-bound translation factors.

In terms of biological role, forms part of the ribosomal stalk which helps the ribosome interact with GTP-bound translation factors. Is thus essential for accurate translation. This chain is Large ribosomal subunit protein bL12, found in Campylobacter fetus subsp. fetus (strain 82-40).